The following is a 662-amino-acid chain: Histidine decarboxylase (662 aa).

Substrate contacts are provided by tyrosine 88 and histidine 201. At lysine 312 the chain carries N6-(pyridoxal phosphate)lysine. Positions 489–518 (QPSPRAKNVIPPPPGTRGLSLESVSEGGDD) are disordered.

Belongs to the group II decarboxylase family. Homodimer. It depends on pyridoxal 5'-phosphate as a cofactor.

It catalyses the reaction L-histidine + H(+) = histamine + CO2. The protein operates within amine and polyamine biosynthesis; histamine biosynthesis; histamine from L-histidine: step 1/1. Catalyzes the biosynthesis of histamine from histidine. In Mus musculus (Mouse), this protein is Histidine decarboxylase (Hdc).